The chain runs to 214 residues: Glutathione S-transferase F12 (214 aa).

Positions 2–82 (VVKLYGQVTA…YYATKFADQG (81 aa)) constitute a GST N-terminal domain. Glutathione is bound by residues 11–12 (AA), 40–41 (QK), 53–54 (QV), and 66–67 (ES). Positions 89-214 (SLEHRAIVDQ…WKKLMVLAGH (126 aa)) constitute a GST C-terminal domain.

The protein belongs to the GST superfamily. Phi family.

It localises to the cytoplasm. The protein localises to the cytosol. The catalysed reaction is RX + glutathione = an S-substituted glutathione + a halide anion + H(+). Its function is as follows. Involved in the transport and/or accumulation of both anthocyanins and proanthocyanidins (PA)s in the vacuole. Functions in the cytosol to maintain the regular accumulation in the vacuole of PA precursors, such as epicatechin and glycosylated epicatechin. In Arabidopsis thaliana (Mouse-ear cress), this protein is Glutathione S-transferase F12.